The chain runs to 360 residues: Phenylalanine--tRNA ligase alpha subunit (360 aa).

Glutamate 260 lines the Mg(2+) pocket.

It belongs to the class-II aminoacyl-tRNA synthetase family. Phe-tRNA synthetase alpha subunit type 1 subfamily. As to quaternary structure, tetramer of two alpha and two beta subunits. Mg(2+) is required as a cofactor.

The protein resides in the cytoplasm. It carries out the reaction tRNA(Phe) + L-phenylalanine + ATP = L-phenylalanyl-tRNA(Phe) + AMP + diphosphate + H(+). This is Phenylalanine--tRNA ligase alpha subunit from Rhizobium etli (strain CIAT 652).